A 559-amino-acid polypeptide reads, in one-letter code: Tectonic-like complex member MKS1 (559 aa).

Residues 311-439 form the C2 B9-type domain; that stretch reads LRLFVNGEVV…TVSTWRPVEL (129 aa).

In terms of assembly, part of the tectonic-like complex (also named B9 complex). Interacts with TMEM107. Interacts with TCTN3, AHI1, TCTN1, TCTN2, CC2D2A. Interacts with FLNA. Interacts with TMEM67. Interacts with B9D1 and B9D2.

It is found in the cytoplasm. It localises to the cytoskeleton. The protein localises to the cilium basal body. Its subcellular location is the microtubule organizing center. The protein resides in the centrosome. Component of the tectonic-like complex, a complex localized at the transition zone of primary cilia and acting as a barrier that prevents diffusion of transmembrane proteins between the cilia and plasma membranes. Involved in centrosome migration to the apical cell surface during early ciliogenesis. Required for ciliary structure and function, including a role in regulating length and appropriate number through modulating centrosome duplication. Required for cell branching morphology. The polypeptide is Tectonic-like complex member MKS1 (MKS1) (Homo sapiens (Human)).